An 861-amino-acid chain; its full sequence is DNA mismatch repair protein MutS (861 aa).

618–625 (GPNMGGKS) contributes to the ATP binding site.

The protein belongs to the DNA mismatch repair MutS family.

Functionally, this protein is involved in the repair of mismatches in DNA. It is possible that it carries out the mismatch recognition step. This protein has a weak ATPase activity. This Shewanella sp. (strain ANA-3) protein is DNA mismatch repair protein MutS.